Here is a 79-residue protein sequence, read N- to C-terminus: Keratin-associated protein 21-1 (79 aa).

Interacts with hair keratins.

In terms of biological role, in the hair cortex, hair keratin intermediate filaments are embedded in an interfilamentous matrix, consisting of hair keratin-associated proteins (KRTAP), which are essential for the formation of a rigid and resistant hair shaft through their extensive disulfide bond cross-linking with abundant cysteine residues of hair keratins. The matrix proteins include the high-sulfur and high-glycine-tyrosine keratins. The chain is Keratin-associated protein 21-1 (KRTAP21-1) from Homo sapiens (Human).